The primary structure comprises 155 residues: Ribonuclease H (155 aa).

Positions 1–146 constitute an RNase H type-1 domain; sequence MNALFAWTDG…ADELARAGMA (146 aa). 4 residues coordinate Mg(2+): D9, E52, D74, and D138.

It belongs to the RNase H family. As to quaternary structure, monomer. It depends on Mg(2+) as a cofactor.

Its subcellular location is the cytoplasm. It carries out the reaction Endonucleolytic cleavage to 5'-phosphomonoester.. Its function is as follows. Endonuclease that specifically degrades the RNA of RNA-DNA hybrids. The protein is Ribonuclease H of Paracoccus denitrificans (strain Pd 1222).